Here is a 191-residue protein sequence, read N- to C-terminus: Holliday junction branch migration complex subunit RuvA (191 aa).

The tract at residues 1–64 (MIGRLTGTLA…EDAQLLYGFL (64 aa)) is domain I. Residues 65–138 (TATERATFRQ…KGKLGPDLAL (74 aa)) form a domain II region. The flexible linker stretch occupies residues 138–142 (LPGAV). The tract at residues 143-191 (IRNEAQSDIVQALIALGYNEREAAAAIKPLPADVGVSDGIKLALRALGK) is domain III.

It belongs to the RuvA family. Homotetramer. Forms an RuvA(8)-RuvB(12)-Holliday junction (HJ) complex. HJ DNA is sandwiched between 2 RuvA tetramers; dsDNA enters through RuvA and exits via RuvB. An RuvB hexamer assembles on each DNA strand where it exits the tetramer. Each RuvB hexamer is contacted by two RuvA subunits (via domain III) on 2 adjacent RuvB subunits; this complex drives branch migration. In the full resolvosome a probable DNA-RuvA(4)-RuvB(12)-RuvC(2) complex forms which resolves the HJ.

It is found in the cytoplasm. The RuvA-RuvB-RuvC complex processes Holliday junction (HJ) DNA during genetic recombination and DNA repair, while the RuvA-RuvB complex plays an important role in the rescue of blocked DNA replication forks via replication fork reversal (RFR). RuvA specifically binds to HJ cruciform DNA, conferring on it an open structure. The RuvB hexamer acts as an ATP-dependent pump, pulling dsDNA into and through the RuvAB complex. HJ branch migration allows RuvC to scan DNA until it finds its consensus sequence, where it cleaves and resolves the cruciform DNA. The chain is Holliday junction branch migration complex subunit RuvA from Leptothrix cholodnii (strain ATCC 51168 / LMG 8142 / SP-6) (Leptothrix discophora (strain SP-6)).